We begin with the raw amino-acid sequence, 152 residues long: Protein FERTILITY RESTORER RF2, mitochondrial (152 aa).

A mitochondrion-targeting transit peptide spans Met-1–Cys-52. Positions Cys-52–Val-69 are enriched in polar residues. The interval Cys-52–Gly-99 is disordered.

It is found in the mitochondrion. Its function is as follows. Restores fertility in rice varieties with LD-type cytoplasmic male sterility (CMS). CMS is caused by genetic incompatibility between nuclei and mitochondria within male reproductive organs. Corresponds to the functional allele of RF2, which is dependent of the presence of Ile-78 in the japonica cultivars Fukuyama and Owarihatamochi (AC F1SZ42), and indica cultivar Kasalath (AC F1SZ41). Non-functional RF2 alleles are found in japonica cultivars Taichung 65 and Nipponbare (AC F1SZ44), where Ile-78 is replaced by Thr-78. In Oryza sativa subsp. japonica (Rice), this protein is Protein FERTILITY RESTORER RF2, mitochondrial.